The sequence spans 101 residues: Co-chaperonin GroES (101 aa).

The protein belongs to the GroES chaperonin family. In terms of assembly, heptamer of 7 subunits arranged in a ring. Interacts with the chaperonin GroEL.

It localises to the cytoplasm. Together with the chaperonin GroEL, plays an essential role in assisting protein folding. The GroEL-GroES system forms a nano-cage that allows encapsulation of the non-native substrate proteins and provides a physical environment optimized to promote and accelerate protein folding. GroES binds to the apical surface of the GroEL ring, thereby capping the opening of the GroEL channel. This Lawsonia intracellularis protein is Co-chaperonin GroES.